Reading from the N-terminus, the 104-residue chain is Growth-regulated protein homolog alpha (104 aa).

The signal sequence occupies residues Met1 to Ala30. 2 disulfide bridges follow: Cys40–Cys66 and Cys42–Cys82.

The protein belongs to the intercrine alpha (chemokine CxC) family.

It is found in the secreted. This chain is Growth-regulated protein homolog alpha, found in Bos taurus (Bovine).